The sequence spans 821 residues: Epidermal growth factor receptor kinase substrate 8 (821 aa).

2 stretches are compositionally biased toward polar residues: residues 1 to 10 (MNGHMSNRSS) and 17 to 28 (SQLNGYGSSPPY). Positions 1–39 (MNGHMSNRSSGYGVYPSQLNGYGSSPPYSQMDREHSSRT) are disordered. The residue at position 58 (serine 58) is a Phosphoserine. In terms of domain architecture, PTB spans 64-194 (QYRVEHLTTF…SDSKGGKQKR (131 aa)). Disordered regions lie at residues 204 to 224 (KADPGIPPPPRAPAPVPPGTV), 295 to 320 (SELSKRKKSKKSKRKGPGEGVLTLRA), and 461 to 525 (ANAE…RNYD). The segment covering 208–221 (GIPPPPRAPAPVPP) has biased composition (pro residues). Threonine 223 is subject to Phosphothreonine. Positions 299-309 (KRKKSKKSKRK) are enriched in basic residues. Position 317 is a phosphothreonine (threonine 317). Residues 464-476 (EHQRKQDSKRLST) show a composition bias toward basic and acidic residues. Serine 475 bears the Phosphoserine mark. Residues 530-589 (QPKKYAKSKYDFVARNSSELSVMKDDVLEILDDRRQWWKVRNASGDSGFVPNNILDIMRT) form the SH3 domain. Residues 610–683 (TEYGLRSADT…YKQLPVDRRK (74 aa)) form a disordered region. Over residues 622–641 (APSPPPTPAPVPVPLPPSVP) the composition is skewed to pro residues. Serine 624 is modified (phosphoserine; by MAPK). Residue threonine 628 is modified to Phosphothreonine; by MAPK. Over residues 642–651 (APVSVPKVPA) the composition is skewed to low complexity. The effector region stretch occupies residues 648–821 (KVPANVTRQN…VESFDEGSSH (174 aa)). Phosphoserine occurs at positions 658 and 661. A compositionally biased stretch (basic and acidic residues) spans 670–683 (DSQRYKQLPVDRRK). The amphipathic helix stretch occupies residues 679–697 (VDRRKSQMEEVQDELFQRL). Position 684 is a phosphoserine (serine 684). 4 helix bundle regions span residues 717-737 (VINITYDSSPEEVKTWLQSKG), 751-756 (GAQLFS), 761-766 (ELRSVC), and 765-784 (VCPEGARVFNQITVQKAALE). The disordered stretch occupies residues 800 to 821 (QEKISAAASDSGVESFDEGSSH). Phosphoserine is present on residues serine 810 and serine 814.

This sequence belongs to the EPS8 family. Homodimer. Part of a complex consisting of ABI1, EPS8 and SOS1. Interacts with BAIAP2. Interacts with SHB and LANCL1. Interacts with EGFR; mediates EPS8 phosphorylation. Interacts with MYO15A and WHRN. Ubiquitinated by the SCF(FBXW5) E3 ubiquitin-protein ligase complex during G2 phase, leading to its transient degradation and subsequent cell shape changes required to allow mitotic progression. Reappears at the midzone of dividing cells. In terms of processing, phosphorylation at Ser-624 and Thr-628 by MAPK following BDNF treatment promotes removal from actin and filopodia formation. Phosphorylated by several receptor tyrosine kinases. As to expression, expressed in neuronal cell body and neurites, and prominently enriched in the axonal growth cone. Expressed at the tips of cochlear hair cells stereocilia.

The protein localises to the cytoplasm. It localises to the cell cortex. The protein resides in the cell projection. It is found in the ruffle membrane. Its subcellular location is the growth cone. The protein localises to the stereocilium. It localises to the synapse. The protein resides in the synaptosome. Its function is as follows. Signaling adapter that controls various cellular protrusions by regulating actin cytoskeleton dynamics and architecture. Depending on its association with other signal transducers, can regulate different processes. Together with SOS1 and ABI1, forms a trimeric complex that participates in transduction of signals from Ras to Rac by activating the Rac-specific guanine nucleotide exchange factor (GEF) activity. Acts as a direct regulator of actin dynamics by binding actin filaments and has both barbed-end actin filament capping and actin bundling activities depending on the context. Displays barbed-end actin capping activity when associated with ABI1, thereby regulating actin-based motility process: capping activity is auto-inhibited and inhibition is relieved upon ABI1 interaction. Also shows actin bundling activity when associated with BAIAP2, enhancing BAIAP2-dependent membrane extensions and promoting filopodial protrusions. Involved in the regulation of processes such as axonal filopodia growth, stereocilia length, dendritic cell migration and cancer cell migration and invasion. Acts as a regulator of axonal filopodia formation in neurons: in the absence of neurotrophic factors, negatively regulates axonal filopodia formation via actin-capping activity. In contrast, it is phosphorylated in the presence of BDNF leading to inhibition of its actin-capping activity and stimulation of filopodia formation. Component of a complex with WHRN and MYO15A that localizes at stereocilia tips and is required for elongation of the stereocilia actin core. Indirectly involved in cell cycle progression; its degradation following ubiquitination being required during G2 phase to promote cell shape changes. This chain is Epidermal growth factor receptor kinase substrate 8 (Eps8), found in Mus musculus (Mouse).